The chain runs to 673 residues: Ion-translocating oxidoreductase complex subunit C (673 aa).

4Fe-4S ferredoxin-type domains lie at 368 to 397 (MGAPQEEKSCIRCSACADACPADLLPQQLY) and 407 to 436 (KATAHHIADCIECGACAWVCPSNIPLVQYF). Residues cysteine 377, cysteine 380, cysteine 383, cysteine 387, cysteine 416, cysteine 419, cysteine 422, and cysteine 426 each coordinate [4Fe-4S] cluster. Disordered regions lie at residues 534-553 (QARAKQAAHPVADSAISGGA) and 563-653 (IARA…AAVA).

The protein belongs to the 4Fe4S bacterial-type ferredoxin family. RnfC subfamily. As to quaternary structure, the complex is composed of six subunits: RsxA, RsxB, RsxC, RsxD, RsxE and RsxG. Requires [4Fe-4S] cluster as cofactor.

It localises to the cell inner membrane. Part of a membrane-bound complex that couples electron transfer with translocation of ions across the membrane. Required to maintain the reduced state of SoxR. This chain is Ion-translocating oxidoreductase complex subunit C, found in Salmonella gallinarum (strain 287/91 / NCTC 13346).